A 215-amino-acid chain; its full sequence is Soluble inorganic pyrophosphatase (215 aa).

Positions 1-21 are enriched in low complexity; the sequence is MSQEDSTSAAAAQQPTSRPAP. Positions 1–24 are disordered; it reads MSQEDSTSAAAAQQPTSRPAPKLN. Mg(2+)-binding residues include aspartate 103, aspartate 108, and aspartate 140.

The protein belongs to the PPase family. Mg(2+) is required as a cofactor. Expressed in metabolically active tissue such as root, shoot, embryo and aleurone.

It localises to the cytoplasm. It carries out the reaction diphosphate + H2O = 2 phosphate + H(+). Its function is as follows. May play a role in germination. The polypeptide is Soluble inorganic pyrophosphatase (IPP) (Hordeum vulgare subsp. vulgare (Domesticated barley)).